We begin with the raw amino-acid sequence, 206 residues long: Dephospho-CoA kinase (206 aa).

The 197-residue stretch at 4 to 200 (TVALTGGIGS…ASYLKLASQF (197 aa)) folds into the DPCK domain. 12 to 17 (GSGKST) contacts ATP.

Belongs to the CoaE family.

It localises to the cytoplasm. The enzyme catalyses 3'-dephospho-CoA + ATP = ADP + CoA + H(+). It functions in the pathway cofactor biosynthesis; coenzyme A biosynthesis; CoA from (R)-pantothenate: step 5/5. Catalyzes the phosphorylation of the 3'-hydroxyl group of dephosphocoenzyme A to form coenzyme A. The sequence is that of Dephospho-CoA kinase from Salmonella typhimurium (strain LT2 / SGSC1412 / ATCC 700720).